The sequence spans 149 residues: NADH-quinone oxidoreductase subunit I 1 (149 aa).

4Fe-4S ferredoxin-type domains lie at 51-82 (LKSFADTGTHKCIACGTCERMCPSNVIKVQGT) and 93-122 (THYVIDFTRCSLCGICVESCPTGTLQYSTE). Residues C62, C65, C68, C72, C102, C105, C108, and C112 each contribute to the [4Fe-4S] cluster site.

Belongs to the complex I 23 kDa subunit family. NDH-1 is composed of 14 different subunits. Subunits NuoA, H, J, K, L, M, N constitute the membrane sector of the complex. The cofactor is [4Fe-4S] cluster.

Its subcellular location is the cell inner membrane. It carries out the reaction a quinone + NADH + 5 H(+)(in) = a quinol + NAD(+) + 4 H(+)(out). Its function is as follows. NDH-1 shuttles electrons from NADH, via FMN and iron-sulfur (Fe-S) centers, to quinones in the respiratory chain. The immediate electron acceptor for the enzyme in this species is believed to be ubiquinone. Couples the redox reaction to proton translocation (for every two electrons transferred, four hydrogen ions are translocated across the cytoplasmic membrane), and thus conserves the redox energy in a proton gradient. The polypeptide is NADH-quinone oxidoreductase subunit I 1 (Syntrophobacter fumaroxidans (strain DSM 10017 / MPOB)).